Consider the following 193-residue polypeptide: Ion-translocating oxidoreductase complex subunit A (193 aa).

Helical transmembrane passes span Leu-5 to Leu-25, Phe-47 to Leu-67, Leu-72 to Val-92, Leu-102 to Leu-122, Ala-134 to Ile-154, and Ala-171 to Val-191.

This sequence belongs to the NqrDE/RnfAE family. As to quaternary structure, the complex is composed of six subunits: RsxA, RsxB, RsxC, RsxD, RsxE and RsxG.

It is found in the cell inner membrane. In terms of biological role, part of a membrane-bound complex that couples electron transfer with translocation of ions across the membrane. Required to maintain the reduced state of SoxR. The polypeptide is Ion-translocating oxidoreductase complex subunit A (Salmonella arizonae (strain ATCC BAA-731 / CDC346-86 / RSK2980)).